Reading from the N-terminus, the 2225-residue chain is Multifunctional protein CAD (2225 aa).

A2 is modified (N-acetylalanine). The segment at 2–365 (AALVLEDGSV…TVREAAAGNI (364 aa)) is GATase (Glutamine amidotransferase). S44, G222, and G224 together coordinate L-glutamine. The region spanning 177 to 363 (RICALDCGLK…LETVREAAAG (187 aa)) is the Glutamine amidotransferase type-1 domain. C252 (nucleophile; for GATase activity) is an active-site residue. L-glutamine is bound by residues L253, Q256, N294, G296, and F297. Active-site for GATase activity residues include H336 and E338. The interval 366–394 (GGQTVRERLAQRLCPPELPIPGSGLPPPR) is linker. A CPSase A region spans residues 395–933 (KVLILGSGGL…NTHDLDFRAP (539 aa)). The segment at 395 to 1455 (KVLILGSGGL…APPLKVHVDC (1061 aa)) is CPSase (Carbamoyl-phosphate synthase). T456 bears the Phosphothreonine; by MAPK1 mark. Positions 515, 555, 561, 562, 592, 599, 625, 626, 627, 668, and 682 each coordinate ATP. The 193-residue stretch at 519-711 (AARMAEIGEH…LAYVAAKLAL (193 aa)) folds into the ATP-grasp 1 domain. 3 residues coordinate Mg(2+): Q668, E682, and N684. 3 residues coordinate Mn(2+): Q668, E682, and N684. Residue K747 is modified to N6-acetyllysine. Positions 934–1455 (HVLVLGSGVY…APPLKVHVDC (522 aa)) are CPSase B. Position 1038 is a phosphoserine (S1038). Positions 1052 to 1243 (SRLLDTIGIS…LVALATRIIM (192 aa)) constitute an ATP-grasp 2 domain. Positions 1088, 1127, 1129, 1134, 1159, 1160, 1161, 1162, 1202, and 1214 each coordinate ATP. Positions 1202, 1214, and 1216 each coordinate Mg(2+). Positions 1202, 1214, and 1216 each coordinate Mn(2+). Positions 1308–1462 (FKIPEKNILL…VDCMTSQKLV (155 aa)) constitute an MGS-like domain. Phosphoserine; by PKA is present on S1406. Position 1411 is an N6-acetyllysine (K1411). The DHOase (dihydroorotase) stretch occupies residues 1456–1788 (MTSQKLVRLP…VKGTVRRVVL (333 aa)). Residues H1471 and H1473 each coordinate Zn(2+). (S)-dihydroorotate contacts are provided by R1475 and N1505. 5 residues coordinate Zn(2+): K1556, H1590, C1613, H1614, and E1637. N6-carboxylysine is present on K1556. R1661 is a (S)-dihydroorotate binding site. D1686 provides a ligand contact to Zn(2+). D1686 acts as the For DHOase activity in catalysis. (S)-dihydroorotate-binding residues include H1690 and P1702. Residues 1789 to 1917 (RGEVAYIDGQ…GLLHPQMSPL (129 aa)) form a linker region. Positions 1815–1885 (GVVPQPPPST…VVEPELMGTP (71 aa)) are disordered. Over residues 1825 to 1834 (PATTEITTTP) the composition is skewed to low complexity. S1859 carries the phosphoserine modification. Residues 1866–1878 (EEPKEKPPRKVVE) are compositionally biased toward basic and acidic residues. T1884 is subject to Phosphothreonine. 2 positions are modified to phosphoserine: S1900 and S1938. Residues 1918–2225 (LHSLVGQHIL…ALLATVLGRF (308 aa)) are ATCase (Aspartate transcarbamylase). The carbamoyl phosphate site is built by R1975 and T1976. Residue K2003 coordinates L-aspartate. Residues R2024, H2052, and Q2055 each coordinate carbamoyl phosphate. Positions 2085 and 2146 each coordinate L-aspartate. Positions 2185 and 2186 each coordinate carbamoyl phosphate.

This sequence in the N-terminal section; belongs to the CarA family. The protein in the 2nd section; belongs to the CarB family. It in the 3rd section; belongs to the metallo-dependent hydrolases superfamily. DHOase family. CAD subfamily. In the C-terminal section; belongs to the aspartate/ornithine carbamoyltransferase superfamily. ATCase family. In terms of assembly, homohexamer. Interacts with CIPC. The cofactor is Zn(2+). It depends on Mg(2+) as a cofactor. Requires Mn(2+) as cofactor. In terms of processing, activated by MAP kinase (Erk1/2) phosphorylation just prior to the S phase of the cell cycle, when the demand for pyrimidine nucleotides is greatest, and down-regulated as the cells emerge from S phase by protein kinase A (PKA) phosphorylation. Phosphorylation at Ser-1859 by RPS6KB1 downstream of MTOR promotes oligomerization and stimulates dihydroorotase activity. Phosphorylation at Ser-1406 reduces sensitivity to feedback inhibition by UTP.

It localises to the cytoplasm. The protein resides in the nucleus. It catalyses the reaction hydrogencarbonate + L-glutamine + 2 ATP + H2O = carbamoyl phosphate + L-glutamate + 2 ADP + phosphate + 2 H(+). It carries out the reaction L-glutamine + H2O = L-glutamate + NH4(+). The enzyme catalyses hydrogencarbonate + NH4(+) + 2 ATP = carbamoyl phosphate + 2 ADP + phosphate + 2 H(+). The catalysed reaction is carbamoyl phosphate + L-aspartate = N-carbamoyl-L-aspartate + phosphate + H(+). It catalyses the reaction (S)-dihydroorotate + H2O = N-carbamoyl-L-aspartate + H(+). Its pathway is pyrimidine metabolism; UMP biosynthesis via de novo pathway; (S)-dihydroorotate from bicarbonate: step 1/3. It participates in pyrimidine metabolism; UMP biosynthesis via de novo pathway; (S)-dihydroorotate from bicarbonate: step 2/3. It functions in the pathway pyrimidine metabolism; UMP biosynthesis via de novo pathway; (S)-dihydroorotate from bicarbonate: step 3/3. Allosterically regulated and controlled by phosphorylation. 5-phosphoribose 1-diphosphate (PRPP) is an activator while UMP and UTP are inhibitors of the CPSase reaction. Multifunctional protein that encodes the first 3 enzymatic activities of the de novo pyrimidine pathway: carbamoylphosphate synthetase (CPSase; EC 6.3.5.5), aspartate transcarbamylase (ATCase; EC 2.1.3.2) and dihydroorotase (DHOase; EC 3.5.2.3). The CPSase-function is accomplished in 2 steps, by a glutamine-dependent amidotransferase activity (GATase) that binds and cleaves glutamine to produce ammonia, followed by an ammonium-dependent carbamoyl phosphate synthetase, which reacts with the ammonia, hydrogencarbonate and ATP to form carbamoyl phosphate. The endogenously produced carbamoyl phosphate is sequestered and channeled to the ATCase active site. ATCase then catalyzes the formation of carbamoyl-L-aspartate from L-aspartate and carbamoyl phosphate. In the last step, DHOase catalyzes the cyclization of carbamoyl aspartate to dihydroorotate. This chain is Multifunctional protein CAD (Cad), found in Mus musculus (Mouse).